The chain runs to 734 residues: Elongation factor 2 (734 aa).

Residues 18 to 259 (EQIRNIGITA…MVVKYVPNPR (242 aa)) form the tr-type G domain. GTP-binding positions include 27-34 (AHVDHGKT), 93-97 (DTPGH), and 147-150 (NKID). Histidine 600 bears the Diphthamide mark.

This sequence belongs to the TRAFAC class translation factor GTPase superfamily. Classic translation factor GTPase family. EF-G/EF-2 subfamily.

The protein resides in the cytoplasm. Functionally, catalyzes the GTP-dependent ribosomal translocation step during translation elongation. During this step, the ribosome changes from the pre-translocational (PRE) to the post-translocational (POST) state as the newly formed A-site-bound peptidyl-tRNA and P-site-bound deacylated tRNA move to the P and E sites, respectively. Catalyzes the coordinated movement of the two tRNA molecules, the mRNA and conformational changes in the ribosome. The polypeptide is Elongation factor 2 (fusA) (Desulfurococcus mucosus (Desulfurococcus mobilis)).